We begin with the raw amino-acid sequence, 312 residues long: Olfactory receptor 51B5 (312 aa).

Over 1 to 23 (MSSSGSSHPFLLTGFPGLEEAHH) the chain is Extracellular. Residues 24 to 44 (WISVFFLFMYISILFGNGTLL) traverse the membrane as a helical segment. The Cytoplasmic segment spans residues 45 to 52 (LLIKEDHN). A helical membrane pass occupies residues 53-73 (LHEPMYFFLAMLAATDLGLAL). At 74–97 (TTMPTVLGVLWLDHREIGSAACFS) the chain is on the extracellular side. C95 and C187 are disulfide-bonded. A helical membrane pass occupies residues 98-118 (QAYFIHSLSFLESGILLAMAY). The Cytoplasmic segment spans residues 119 to 137 (DRFIAICNPLRYTSVLTNT). Residues 138–158 (RVVKIGLGVLMRGFVSVVPPI) traverse the membrane as a helical segment. Topologically, residues 159–194 (RPLYFFLYCHSHVLSHAFCLHQDVIKLACADTTFNR) are extracellular. The chain crosses the membrane as a helical span at residues 195 to 215 (LYPAVLVVFIFVLDYLIIFIS). Residues 216–235 (YVLILKTVLSIASREERAKA) are Cytoplasmic-facing. Residues 236-256 (LITCVSHICCVLVFYVTVIGL) traverse the membrane as a helical segment. The Extracellular portion of the chain corresponds to 257-271 (SLIHRFGKQVPHIVH). Residues 272-292 (LIMSYAYFLFPPLMNPITYSV) traverse the membrane as a helical segment. Over 293–312 (KTKQIQNAILHLFTTHRIGT) the chain is Cytoplasmic.

It belongs to the G-protein coupled receptor 1 family.

The protein localises to the cell membrane. Its function is as follows. Odorant receptor. This is Olfactory receptor 51B5 (OR51B5) from Homo sapiens (Human).